Here is a 109-residue protein sequence, read N- to C-terminus: MKVLVLFSVLFLTLFSYSSTEAMDEFDSDAEEDMLSLMANEQVRAKACTPRLHDCSHDRHSCCRGELFKDVCYCFYPEGEDKTEVCSCQQPKSHKYIEKVVDKARTVVG.

The N-terminal stretch at 1-22 (MKVLVLFSVLFLTLFSYSSTEA) is a signal peptide. Positions 23 to 44 (MDEFDSDAEEDMLSLMANEQVR) are excised as a propeptide. The knottin domain stretch occupies residues 45–88 (AKACTPRLHDCSHDRHSCCRGELFKDVCYCFYPEGEDKTEVCSC). Intrachain disulfides connect Cys48–Cys63, Cys55–Cys72, Cys62–Cys88, and Cys74–Cys86. The linear cationic cytotoxin domain stretch occupies residues 89–108 (QQPKSHKYIEKVVDKARTVV).

This sequence belongs to the neurotoxin 19 (CSTX) family. 05 (U4-Lctx) subfamily. In terms of tissue distribution, expressed by the venom gland.

Its subcellular location is the secreted. In terms of biological role, enhances the high-affinity desensitization of human P2RX3 purinoceptors. The protein is U4-lycotoxin-Ls1d of Lycosa singoriensis (Wolf spider).